Reading from the N-terminus, the 389-residue chain is Cellobiose 2-epimerase (389 aa).

It belongs to the cellobiose 2-epimerase family.

It is found in the cytoplasm. It carries out the reaction D-cellobiose = beta-D-glucosyl-(1-&gt;4)-D-mannopyranose. Its activity is regulated as follows. Enhanced by Mg(2+) and Ca(2+) ions, ethylenediaminetetraacetic acid, ethylene glycol tetraacetic acid and citrate. Inhibited by Al(3+), Fe(3+), Co(2+), Cu(2+), Zn(2+), Pb(2+) and Ag(+) ions, iodoacetate, 4-chloromercuribenzoate and N-bromosuccinimide. Catalyzes the reversible epimerization of cellobiose to 4-O-beta-D-glucopyranosyl-D-mannose (Glc-Man). Can also epimerize cellotriose to Glc-Glc-Man, cellotetraose to Glc-Glc-Glc-Man, and lactose to epilactose. The protein is Cellobiose 2-epimerase (ce-ne1) of Ruminococcus albus.